The following is a 156-amino-acid chain: ATP synthase subunit b (156 aa).

The helical transmembrane segment at 7-27 (LIGQTVAFIIFVWFCMKFVWP) threads the bilayer.

The protein belongs to the ATPase B chain family. F-type ATPases have 2 components, F(1) - the catalytic core - and F(0) - the membrane proton channel. F(1) has five subunits: alpha(3), beta(3), gamma(1), delta(1), epsilon(1). F(0) has three main subunits: a(1), b(2) and c(10-14). The alpha and beta chains form an alternating ring which encloses part of the gamma chain. F(1) is attached to F(0) by a central stalk formed by the gamma and epsilon chains, while a peripheral stalk is formed by the delta and b chains.

Its subcellular location is the cell inner membrane. F(1)F(0) ATP synthase produces ATP from ADP in the presence of a proton or sodium gradient. F-type ATPases consist of two structural domains, F(1) containing the extramembraneous catalytic core and F(0) containing the membrane proton channel, linked together by a central stalk and a peripheral stalk. During catalysis, ATP synthesis in the catalytic domain of F(1) is coupled via a rotary mechanism of the central stalk subunits to proton translocation. Functionally, component of the F(0) channel, it forms part of the peripheral stalk, linking F(1) to F(0). In Shewanella sp. (strain ANA-3), this protein is ATP synthase subunit b.